Reading from the N-terminus, the 326-residue chain is Phospho-N-acetylmuramoyl-pentapeptide-transferase (326 aa).

Transmembrane regions (helical) follow at residues 4–24 (IWVA…LVIP), 49–69 (TPTM…FLLI), 74–94 (GLIV…DDYI), 109–129 (KLLG…FEAG), 151–171 (LGWW…SNAV), 179–199 (GLAA…ALAA), 203–223 (GVAA…FFNF), 228–248 (VFMG…AAVV), 254–274 (LFLI…IQVI), and 303–323 (VVIT…AGLY).

The protein belongs to the glycosyltransferase 4 family. MraY subfamily. The cofactor is Mg(2+).

Its subcellular location is the cell membrane. The enzyme catalyses UDP-N-acetyl-alpha-D-muramoyl-L-alanyl-gamma-D-glutamyl-meso-2,6-diaminopimeloyl-D-alanyl-D-alanine + di-trans,octa-cis-undecaprenyl phosphate = di-trans,octa-cis-undecaprenyl diphospho-N-acetyl-alpha-D-muramoyl-L-alanyl-D-glutamyl-meso-2,6-diaminopimeloyl-D-alanyl-D-alanine + UMP. The protein operates within cell wall biogenesis; peptidoglycan biosynthesis. Its function is as follows. Catalyzes the initial step of the lipid cycle reactions in the biosynthesis of the cell wall peptidoglycan: transfers peptidoglycan precursor phospho-MurNAc-pentapeptide from UDP-MurNAc-pentapeptide onto the lipid carrier undecaprenyl phosphate, yielding undecaprenyl-pyrophosphoryl-MurNAc-pentapeptide, known as lipid I. This Pelotomaculum thermopropionicum (strain DSM 13744 / JCM 10971 / SI) protein is Phospho-N-acetylmuramoyl-pentapeptide-transferase.